We begin with the raw amino-acid sequence, 634 residues long: MKLAMRRASTFALLALSWSAAVSAASSAGDYFVRSLPGAPPGPLVKMHAGHIEVSPEKNGNLFFWHFQNKHIANRQRTVIWLNGGPGCSSEDGALMEVGPYRLKDDHTLVPNEGSWHEFANLMFVDNPVGTGFSYVNTDSYVTELDEMADQFVIFLEKFFELFPEYSQDDIYIAGESFAGQHIPYIAKHILDRNKNSMTKIKWNLKGLLIGNGWIAPNEQYRAYLDFSYSKGLLDKNSETAKTLEAQHKDCAKEWEDNGPKVDVAKCESVLQTLLKLSSKVEADGKRHCVNMYDVRLRDTYPSCGMNWPPDLVNVTPYLRRKDVVEALHVNPNKATGWTECTGAVGQSFKAQKSKPSIDLLPKILEEVPILLFSGAEDLICNHIGTEAFIGKMTWNGGKGFEVTPGTWAPRRDWTFEGKDAGFWQEARNLTYVLFKDSSHMVPFDFPRRSRDMLDRFMGVDISSIGGNPTDSRLDGEKLPETTVGGAAGNSTSKQEEEKKKLDEAKWYAYRKSGEVVLVIVAVAAVAWGWYVWRDRRRRRGYQGIFGGSPSESTTRLPGLGSRISSTPSGLEGFRSKRQNGRDVEAGDFDESELDDLHTQTPTDARYSVGADSDDEEDASGSRKEGGPSGGRGR.

Residues 1 to 24 (MKLAMRRASTFALLALSWSAAVSA) form the signal peptide. Residues 25-512 (ASSAGDYFVR…DEAKWYAYRK (488 aa)) lie on the Lumenal side of the membrane. Catalysis depends on residues Ser-177 and Asp-378. Residue Asn-429 is glycosylated (N-linked (GlcNAc...) asparagine). His-440 is a catalytic residue. The segment at 468–498 (NPTDSRLDGEKLPETTVGGAAGNSTSKQEEE) is disordered. N-linked (GlcNAc...) asparagine glycosylation occurs at Asn-490. The chain crosses the membrane as a helical span at residues 513–533 (SGEVVLVIVAVAAVAWGWYVW). The Cytoplasmic segment spans residues 534–634 (RDRRRRRGYQ…EGGPSGGRGR (101 aa)). The tract at residues 542 to 634 (YQGIFGGSPS…EGGPSGGRGR (93 aa)) is disordered.

Belongs to the peptidase S10 family.

It localises to the golgi apparatus. The protein localises to the trans-Golgi network membrane. It carries out the reaction Preferential release of a C-terminal arginine or lysine residue.. Its function is as follows. Protease with a carboxypeptidase B-like function involved in the C-terminal processing of the lysine and arginine residues from protein precursors. Promotes cell fusion and is involved in the programmed cell death. The protein is Pheromone-processing carboxypeptidase KEX1 (KEX1) of Pyricularia oryzae (strain 70-15 / ATCC MYA-4617 / FGSC 8958) (Rice blast fungus).